The sequence spans 428 residues: Histone deacetylase 3 (428 aa).

The interval 3-316 is histone deacetylase; it reads KTVAYFYDPD…WTYETSLLVE (314 aa). Residues His-17, Gly-21, and Lys-25 each coordinate 1D-myo-inositol 1,4,5,6-tetrakisphosphate. The active site involves His-135. Zn(2+) is bound by residues Asp-170, His-172, and Asp-259. Position 265 (Arg-265) interacts with 1D-myo-inositol 1,4,5,6-tetrakisphosphate. Composition is skewed to basic and acidic residues over residues 388–405 and 415–428; these read DRTD…ENYS and DGDH…DVEI. The disordered stretch occupies residues 388–428; the sequence is DRTDEADAEERGPEENYSRPEAPNEFYDGDHDNDKESDVEI. Ser-424 is modified (phosphoserine).

This sequence belongs to the histone deacetylase family. HD type 1 subfamily. Interacts with HDAC7 and HDAC9. Interacts with DAXX, KDM4A, HDAC10 and DACH1. Found in a complex with NCOR1 and NCOR2. Component of the N-Cor repressor complex, at least composed of NCOR1, NCOR2, HDAC3, TBL1X, TBL1R, CORO2A and GPS2. Interacts with BCOR, MJD2A/JHDM3A, NRIP1, PRDM6 and SRY. Interacts with BTBD14B. Interacts with GLIS2. Interacts (via the DNA-binding domain) with NR2C1; the interaction recruits phosphorylated NR2C1 to PML bodies for sumoylation. Component of the Notch corepressor complex. Interacts with CBFA2T3 and NKAP. Interacts with APEX1; the interaction is not dependent on the acetylated status of APEX1. Interacts with ZMYND15. Interacts with SMRT/NCOR2 and BCL6 on DNA enhancer elements. Interacts with INSM1. Interacts with XBP1 isoform 1; the interaction occurs in endothelial cell (EC) under disturbed flow. Interacts (via C-terminus) with CCAR2 (via N-terminus). Interacts with and deacetylates MEF2D. Interacts with BEND3. Interacts with NKAPL. Interacts with DHX36; this interaction occurs in a RNA-dependent manner. Interacts weakly with CRY1; this interaction is enhanced in the presence of FBXL3. Interacts with FBXL3 and BMAL1. Interacts with NCOR1. Interacts with RARA. Interacts with SETD5. In terms of assembly, (Microbial infection) Interacts with human cytomegalovirus (HHV-5) immediate early protein IE1; this interaction decreases histone acetylation and allows transcriptional activation by the virus. Requires Zn(2+) as cofactor. Sumoylated in vitro. Post-translationally, deubiquitinated on 'Lys-63'-linked ubiquitin chains by USP38; leading to a decreased level of histone acetylation. Widely expressed.

The protein resides in the nucleus. Its subcellular location is the chromosome. It is found in the cytoplasm. The protein localises to the cytosol. The catalysed reaction is N(6)-acetyl-L-lysyl-[histone] + H2O = L-lysyl-[histone] + acetate. It carries out the reaction N(6)-acetyl-L-lysyl-[protein] + H2O = L-lysyl-[protein] + acetate. The enzyme catalyses N(6)-(2E)-butenoyl-L-lysyl-[protein] + H2O = (2E)-2-butenoate + L-lysyl-[protein]. It catalyses the reaction N(6)-(2-hydroxyisobutanoyl)-L-lysyl-[protein] + H2O = 2-hydroxy-2-methylpropanoate + L-lysyl-[protein]. The catalysed reaction is N(6)-[(S)-lactoyl]-L-lysyl-[protein] + H2O = (S)-lactate + L-lysyl-[protein]. With respect to regulation, inositol tetraphosphate (1D-myo-inositol 1,4,5,6-tetrakisphosphate) promotes the histone deacetylase activity by acting as an intermolecular glue between HDAC3 and NCOR2, thereby promoting its association with the N-Cor complex, a prerequisite for the histone deacetylase activity. Functionally, histone deacetylase that catalyzes the deacetylation of lysine residues on the N-terminal part of the core histones (H2A, H2B, H3 and H4), and some other non-histone substrates. Histone deacetylation gives a tag for epigenetic repression and plays an important role in transcriptional regulation, cell cycle progression and developmental events. Histone deacetylases act via the formation of large multiprotein complexes, such as N-Cor repressor complex, which activate the histone deacetylase activity. Participates in the BCL6 transcriptional repressor activity by deacetylating the H3 'Lys-27' (H3K27) on enhancer elements, antagonizing EP300 acetyltransferase activity and repressing proximal gene expression. Acts as a molecular chaperone for shuttling phosphorylated NR2C1 to PML bodies for sumoylation. Contributes, together with XBP1 isoform 1, to the activation of NFE2L2-mediated HMOX1 transcription factor gene expression in a PI(3)K/mTORC2/Akt-dependent signaling pathway leading to endothelial cell (EC) survival under disturbed flow/oxidative stress. Regulates both the transcriptional activation and repression phases of the circadian clock in a deacetylase activity-independent manner. During the activation phase, promotes the accumulation of ubiquitinated BMAL1 at the E-boxes and during the repression phase, blocks FBXL3-mediated CRY1/2 ubiquitination and promotes the interaction of CRY1 and BMAL1. The NCOR1-HDAC3 complex regulates the circadian expression of the core clock gene BMAL1 and the genes involved in lipid metabolism in the liver. Also functions as a deacetylase for non-histone targets, such as KAT5, MEF2D, MAPK14, RARA and STAT3. Serves as a corepressor of RARA, mediating its deacetylation and repression, leading to inhibition of RARE DNA element binding. In association with RARA, plays a role in the repression of microRNA-10a and thereby in the inflammatory response. In addition to protein deacetylase activity, also acts as a protein-lysine deacylase by recognizing other acyl groups: catalyzes removal of (2E)-butenoyl (crotonyl), lactoyl (lactyl) and 2-hydroxyisobutanoyl (2-hydroxyisobutyryl) acyl groups from lysine residues, leading to protein decrotonylation, delactylation and de-2-hydroxyisobutyrylation, respectively. Catalyzes decrotonylation of MAPRE1/EB1. Mediates delactylation NBN/NBS1, thereby inhibiting DNA double-strand breaks (DSBs) via homologous recombination (HR). This is Histone deacetylase 3 (HDAC3) from Homo sapiens (Human).